The following is a 190-amino-acid chain: Elongation factor P (190 aa).

Position 34 is an N6-(3,6-diaminohexanoyl)-5-hydroxylysine (K34).

Belongs to the elongation factor P family. May be beta-lysylated on the epsilon-amino group of Lys-34 by the combined action of EpmA and EpmB, and then hydroxylated on the C5 position of the same residue by EpmC (if this protein is present). Lysylation is critical for the stimulatory effect of EF-P on peptide-bond formation. The lysylation moiety may extend toward the peptidyltransferase center and stabilize the terminal 3-CCA end of the tRNA. Hydroxylation of the C5 position on Lys-34 may allow additional potential stabilizing hydrogen-bond interactions with the P-tRNA.

It is found in the cytoplasm. Its pathway is protein biosynthesis; polypeptide chain elongation. Involved in peptide bond synthesis. Alleviates ribosome stalling that occurs when 3 or more consecutive Pro residues or the sequence PPG is present in a protein, possibly by augmenting the peptidyl transferase activity of the ribosome. Modification of Lys-34 is required for alleviation. This chain is Elongation factor P, found in Psychrobacter arcticus (strain DSM 17307 / VKM B-2377 / 273-4).